A 45-amino-acid chain; its full sequence is Large ribosomal subunit protein bL34 (45 aa).

It belongs to the bacterial ribosomal protein bL34 family.

This Streptomyces coelicolor (strain ATCC BAA-471 / A3(2) / M145) protein is Large ribosomal subunit protein bL34 (rpmH).